Here is a 387-residue protein sequence, read N- to C-terminus: 23S rRNA (uracil(747)-C(5))-methyltransferase RlmC (387 aa).

[4Fe-4S] cluster is bound by residues Cys3, Cys11, Cys14, and Cys86. Gln211, Phe240, Glu269, and Asn319 together coordinate S-adenosyl-L-methionine. Cys346 (nucleophile) is an active-site residue.

Belongs to the class I-like SAM-binding methyltransferase superfamily. RNA M5U methyltransferase family. RlmC subfamily.

The enzyme catalyses uridine(747) in 23S rRNA + S-adenosyl-L-methionine = 5-methyluridine(747) in 23S rRNA + S-adenosyl-L-homocysteine + H(+). In terms of biological role, catalyzes the formation of 5-methyl-uridine at position 747 (m5U747) in 23S rRNA. This chain is 23S rRNA (uracil(747)-C(5))-methyltransferase RlmC, found in Pasteurella multocida (strain Pm70).